Here is a 618-residue protein sequence, read N- to C-terminus: Chaperone protein DnaK (618 aa).

At Thr175 the chain carries Phosphothreonine; by autocatalysis. Positions 579–618 (GAPGAEGFDSNMAGEANAGQNANNDDNVVDADYKVEDDEK) are disordered. Over residues 591 to 604 (AGEANAGQNANNDD) the composition is skewed to low complexity.

Belongs to the heat shock protein 70 family.

Its function is as follows. Acts as a chaperone. The chain is Chaperone protein DnaK from Clostridium tetani (strain Massachusetts / E88).